A 325-amino-acid chain; its full sequence is Lipoyl synthase (325 aa).

Residues 1–31 (MANLIDNTARSAASDARAARHPEKQKRADTP) are disordered. Basic and acidic residues predominate over residues 17–31 (RAARHPEKQKRADTP). Cys-65, Cys-70, Cys-76, Cys-91, Cys-95, Cys-98, and Ser-304 together coordinate [4Fe-4S] cluster. The Radical SAM core domain occupies 77–293 (WEQKHATFMI…ETIARAKGFL (217 aa)).

Belongs to the radical SAM superfamily. Lipoyl synthase family. [4Fe-4S] cluster serves as cofactor.

It is found in the cytoplasm. It carries out the reaction [[Fe-S] cluster scaffold protein carrying a second [4Fe-4S](2+) cluster] + N(6)-octanoyl-L-lysyl-[protein] + 2 oxidized [2Fe-2S]-[ferredoxin] + 2 S-adenosyl-L-methionine + 4 H(+) = [[Fe-S] cluster scaffold protein] + N(6)-[(R)-dihydrolipoyl]-L-lysyl-[protein] + 4 Fe(3+) + 2 hydrogen sulfide + 2 5'-deoxyadenosine + 2 L-methionine + 2 reduced [2Fe-2S]-[ferredoxin]. It participates in protein modification; protein lipoylation via endogenous pathway; protein N(6)-(lipoyl)lysine from octanoyl-[acyl-carrier-protein]: step 2/2. Catalyzes the radical-mediated insertion of two sulfur atoms into the C-6 and C-8 positions of the octanoyl moiety bound to the lipoyl domains of lipoate-dependent enzymes, thereby converting the octanoylated domains into lipoylated derivatives. The polypeptide is Lipoyl synthase (Maricaulis maris (strain MCS10) (Caulobacter maris)).